The primary structure comprises 316 residues: Protoheme IX farnesyltransferase (316 aa).

Transmembrane regions (helical) follow at residues 32 to 52 (VMSL…THVN), 53 to 73 (PIIG…SGAL), 98 to 118 (VARE…VITL), 120 to 140 (FVAN…YVVI), 153 to 173 (IVIG…AVAG), 180 to 200 (LALF…LALV), 226 to 246 (ILLY…IGFA), 251 to 271 (GLLS…VYLA), and 280 to 300 (VAMR…AAIV).

This sequence belongs to the UbiA prenyltransferase family. Protoheme IX farnesyltransferase subfamily.

It is found in the cell inner membrane. The catalysed reaction is heme b + (2E,6E)-farnesyl diphosphate + H2O = Fe(II)-heme o + diphosphate. It participates in porphyrin-containing compound metabolism; heme O biosynthesis; heme O from protoheme: step 1/1. Its function is as follows. Converts heme B (protoheme IX) to heme O by substitution of the vinyl group on carbon 2 of heme B porphyrin ring with a hydroxyethyl farnesyl side group. In Methylocella silvestris (strain DSM 15510 / CIP 108128 / LMG 27833 / NCIMB 13906 / BL2), this protein is Protoheme IX farnesyltransferase.